A 161-amino-acid polypeptide reads, in one-letter code: Large ribosomal subunit protein uL10 (161 aa).

Belongs to the universal ribosomal protein uL10 family. Part of the ribosomal stalk of the 50S ribosomal subunit. The N-terminus interacts with L11 and the large rRNA to form the base of the stalk. The C-terminus forms an elongated spine to which L12 dimers bind in a sequential fashion forming a multimeric L10(L12)X complex.

Functionally, forms part of the ribosomal stalk, playing a central role in the interaction of the ribosome with GTP-bound translation factors. This is Large ribosomal subunit protein uL10 from Campylobacter fetus subsp. fetus (strain 82-40).